Consider the following 399-residue polypeptide: MEKHLIALSVAALLAGAAPASADIKMGSLYPFSGPLALLGDESARGLEIAVEEINAKGGVQGEKIVLVRGDAVDNNQAIGEARRLISVENVAGIFGTFSSGRAVAASQVSELAGVPYFELGAVADEITDRGLENVYRANPYARDFAQMIVEMLQKKIAPKLGKDSKDLKIAVIYEDSSYGTSVAKHEETFLKEAGLNMVLSQSYPGNTVDMSSLVLDLKSAGADVVLQTSYQSDSVLFLQQANEGGYKPSAIVGAGGGYSLQPTADAVGHDVIEAAYDVDFTQFAVNTSFTPGLEEFVEAYKKKYGETPRSGHSLTNYVGAKVILEALNKVKGFDAAAVKQALSAVDIEAGKTAMGYGFKFDQNNQNERASMMGMQWQDGKLVTVYPDAAAISEIRLPQ.

The N-terminal stretch at 1–22 (MEKHLIALSVAALLAGAAPASA) is a signal peptide.

It belongs to the leucine-binding protein family.

Its function is as follows. Component of an amino-acid transport system. This Brucella suis biovar 1 (strain 1330) protein is Leu/Ile/Val-binding protein homolog 7.